We begin with the raw amino-acid sequence, 229 residues long: ATP synthase subunit a (229 aa).

Transmembrane regions (helical) follow at residues 25–45 (VHII…VLGA), 58–75 (FLEV…SVTG), 81–101 (FFPL…IGLV), 110–130 (SINT…FIGI), 141–161 (FLGP…IGHL), 175–195 (MMGH…FFAP), and 196–216 (LPIM…FFLL).

This sequence belongs to the ATPase A chain family. F-type ATPases have 2 components, CF(1) - the catalytic core - and CF(0) - the membrane proton channel. CF(1) has five subunits: alpha(3), beta(3), gamma(1), delta(1), epsilon(1). CF(0) has three main subunits: a(1), b(2) and c(9-12). The alpha and beta chains form an alternating ring which encloses part of the gamma chain. CF(1) is attached to CF(0) by a central stalk formed by the gamma and epsilon chains, while a peripheral stalk is formed by the delta and b chains.

The protein localises to the cell inner membrane. Key component of the proton channel; it plays a direct role in the translocation of protons across the membrane. The polypeptide is ATP synthase subunit a (Desulfosudis oleivorans (strain DSM 6200 / JCM 39069 / Hxd3) (Desulfococcus oleovorans)).